Here is a 167-residue protein sequence, read N- to C-terminus: uncharacterized protein (167 aa).

Residues A95 to N114 form a disordered region.

This is an uncharacterized protein from Haemophilus influenzae (Bacteriophage HP1).